The primary structure comprises 253 residues: Bridging integrator 3 (253 aa).

One can recognise a BAR domain in the interval 9–232 (GQPKKQIVSK…LDQPGHSDEH (224 aa)). 2 coiled-coil regions span residues 16-57 (VSKT…AMSK) and 120-151 (SLNM…KEKT).

The protein localises to the cytoplasm. Its subcellular location is the cytoskeleton. In terms of biological role, involved in cytokinesis and septation where it has a role in the localization of F-actin. This is Bridging integrator 3 (Bin3) from Rattus norvegicus (Rat).